Here is a 582-residue protein sequence, read N- to C-terminus: La-related protein 7 (582 aa).

Met-1 bears the N-acetylmethionine mark. The interval 1 to 27 (METESGNQEKVMEEESTEKKKEVEKKK) is disordered. A compositionally biased stretch (basic and acidic residues) spans 10-25 (KVMEEESTEKKKEVEK). The HTH La-type RNA-binding domain occupies 28–122 (RSRVKQVLAD…KPLGERPKDE (95 aa)). The RRM domain maps to 125 to 203 (RTVYVELLPK…PRKPGIFPKT (79 aa)). Disordered stretches follow at residues 188-368 (NPPE…ERHK) and 410-442 (KSESEMETDSGVPQNTGMKNEKTANREECRTQE). Residues 219–228 (KKKKKKKGRM) are compositionally biased toward basic residues. Basic and acidic residues predominate over residues 229–240 (KKEDNIQAKEEN). Residue Lys-237 forms a Glycyl lysine isopeptide (Lys-Gly) (interchain with G-Cter in SUMO2) linkage. Position 257 is a phosphothreonine (Thr-257). Phosphoserine is present on residues Ser-258, Ser-261, Ser-273, Ser-298, Ser-299, and Ser-300. The segment covering 316–335 (IQKDIIKEASEASKENRDIE) has biased composition (basic and acidic residues). Position 337 is a phosphoserine (Ser-337). The residue at position 338 (Thr-338) is a Phosphothreonine. Ser-351 bears the Phosphoserine mark. Basic residues predominate over residues 354-367 (KTKRKHKKKHKERH). Lys-410 is covalently cross-linked (Glycyl lysine isopeptide (Lys-Gly) (interchain with G-Cter in SUMO2)). Residues 428–442 (KNEKTANREECRTQE) are compositionally biased toward basic and acidic residues. The xRRM domain occupies 450-563 (QFVSGVIVKI…TEKLITKAEK (114 aa)).

It belongs to the LARP7 family. Core component of the 7SK RNP complex, at least composed of 7SK RNA, LARP7, MEPCE, HEXIM1 (or HEXIM2) and P-TEFb (composed of CDK9 and CCNT1/cyclin-T1). Interacts with METTL16. Interacts with RBM7; upon genotoxic stress this interaction is enhanced, triggering the release of inactive P-TEFb complex from the core, yielding to P-TEFb complex activation. Associates with box C/D small nucleolar ribonucleoprotein (snoRNP) complexes.

The protein resides in the nucleus. It localises to the nucleoplasm. In terms of biological role, RNA-binding protein that specifically binds distinct small nuclear RNA (snRNAs) and regulates their processing and function. Specifically binds the 7SK snRNA (7SK RNA) and acts as a core component of the 7SK ribonucleoprotein (RNP) complex, thereby acting as a negative regulator of transcription elongation by RNA polymerase II. The 7SK RNP complex sequesters the positive transcription elongation factor b (P-TEFb) in a large inactive 7SK RNP complex preventing RNA polymerase II phosphorylation and subsequent transcriptional elongation. The 7SK RNP complex also promotes snRNA gene transcription by RNA polymerase II via interaction with the little elongation complex (LEC). LARP7 specifically binds to the highly conserved 3'-terminal U-rich stretch of 7SK RNA; on stimulation, remains associated with 7SK RNA, whereas P-TEFb is released from the complex. LARP7 also acts as a regulator of mRNA splicing fidelity by promoting U6 snRNA processing. Specifically binds U6 snRNAs and associates with a subset of box C/D RNP complexes: promotes U6 snRNA 2'-O-methylation by facilitating U6 snRNA loading into box C/D RNP complexes. U6 snRNA 2'-O-methylation is required for mRNA splicing fidelity. Binds U6 snRNAs with a 5'-CAGGG-3' sequence motif. U6 snRNA processing is required for spermatogenesis. The chain is La-related protein 7 from Homo sapiens (Human).